The following is an 89-amino-acid chain: Phytosulfokines 1 (89 aa).

The signal sequence occupies residues 1 to 22 (MVNPGRTARALCLLCLALLLLG). Positions 23–79 (QDTHSRKLLLQEKHSHGVGNGTTTTQEPSRENGGSTGSNNNGQLQFDSAKWEEFHTD) are excised as a propeptide. The segment at 33-70 (QEKHSHGVGNGTTTTQEPSRENGGSTGSNNNGQLQFDS) is disordered. N-linked (GlcNAc...) asparagine glycosylation occurs at Asn42. Sulfotyrosine occurs at positions 80 and 82. A propeptide spanning residues 85–89 (DVKKP) is cleaved from the precursor.

It belongs to the phytosulfokine family. Post-translationally, sulfation is important for activity and for the binding to a putative membrane receptor. In terms of processing, PSK-alpha is produced by endopeptidase digestion. PSK-beta is produced from PSK-alpha by exopeptidase digestion. Expressed throughout the seedling. More abundant in fragments containing shoot or root apexes where cells proliferate vigorously.

The protein localises to the secreted. Promotes plant cell differentiation, organogenesis and somatic embryogenesis as well as cell proliferation. In Oryza sativa subsp. japonica (Rice), this protein is Phytosulfokines 1 (PSK1).